We begin with the raw amino-acid sequence, 456 residues long: Bifunctional protein GlmU (456 aa).

Residues 1–229 form a pyrophosphorylase region; it reads MTKKALSAVI…VMEVEGANNR (229 aa). UDP-N-acetyl-alpha-D-glucosamine contacts are provided by residues 11–14, Lys25, Gln76, 81–82, 103–105, Gly140, Glu154, Asn169, and Asn227; these read LAAG, GT, and YGD. Asp105 lines the Mg(2+) pocket. Asn227 contributes to the Mg(2+) binding site. A linker region spans residues 230-250; the sequence is LQLAALERYFQNKQASKLLLE. The N-acetyltransferase stretch occupies residues 251–456; that stretch reads GVMIYDPARF…QGWQRPIKKK (206 aa). Positions 333 and 351 each coordinate UDP-N-acetyl-alpha-D-glucosamine. His363 functions as the Proton acceptor in the catalytic mechanism. Residues Tyr366 and Asn377 each coordinate UDP-N-acetyl-alpha-D-glucosamine. Residues Ala380, 386-387, Ser405, Ala423, and Arg440 contribute to the acetyl-CoA site; that span reads NY.

The protein in the N-terminal section; belongs to the N-acetylglucosamine-1-phosphate uridyltransferase family. This sequence in the C-terminal section; belongs to the transferase hexapeptide repeat family. In terms of assembly, homotrimer. Mg(2+) serves as cofactor.

The protein resides in the cytoplasm. It catalyses the reaction alpha-D-glucosamine 1-phosphate + acetyl-CoA = N-acetyl-alpha-D-glucosamine 1-phosphate + CoA + H(+). The catalysed reaction is N-acetyl-alpha-D-glucosamine 1-phosphate + UTP + H(+) = UDP-N-acetyl-alpha-D-glucosamine + diphosphate. It functions in the pathway nucleotide-sugar biosynthesis; UDP-N-acetyl-alpha-D-glucosamine biosynthesis; N-acetyl-alpha-D-glucosamine 1-phosphate from alpha-D-glucosamine 6-phosphate (route II): step 2/2. It participates in nucleotide-sugar biosynthesis; UDP-N-acetyl-alpha-D-glucosamine biosynthesis; UDP-N-acetyl-alpha-D-glucosamine from N-acetyl-alpha-D-glucosamine 1-phosphate: step 1/1. Its pathway is bacterial outer membrane biogenesis; LPS lipid A biosynthesis. Functionally, catalyzes the last two sequential reactions in the de novo biosynthetic pathway for UDP-N-acetylglucosamine (UDP-GlcNAc). The C-terminal domain catalyzes the transfer of acetyl group from acetyl coenzyme A to glucosamine-1-phosphate (GlcN-1-P) to produce N-acetylglucosamine-1-phosphate (GlcNAc-1-P), which is converted into UDP-GlcNAc by the transfer of uridine 5-monophosphate (from uridine 5-triphosphate), a reaction catalyzed by the N-terminal domain. The chain is Bifunctional protein GlmU from Haemophilus influenzae (strain 86-028NP).